A 413-amino-acid chain; its full sequence is FAD-dependent monooxygenase vrtH (413 aa).

The first 23 residues, 1-23 (MQRANHTRPVLIIGAGLSGLAIG), serve as a signal peptide directing secretion. N5 is a glycosylation site (N-linked (GlcNAc...) asparagine). The FAD site is built by E37 and A48. The N-linked (GlcNAc...) asparagine glycan is linked to N94. An FAD-binding site is contributed by R120. N232 is a glycosylation site (N-linked (GlcNAc...) asparagine). Residues D327 and G340 each contribute to the FAD site.

This sequence belongs to the paxM FAD-dependent monooxygenase family. Requires FAD as cofactor.

Its pathway is secondary metabolite biosynthesis; terpenoid biosynthesis. FAD-dependent monooxygenase; part of the gene cluster that mediates the biosynthesis of viridicatumtoxin, a tetracycline-like fungal meroterpenoid with a unique, fused spirobicyclic ring system. The first step of the pathway is the production of the malonamoyl-CoA starter unit for the polyketide synthase vrtA. The aldolase vrtJ may be involved in the synthesis of the malonamate substrate for malonamoyl-CoA synthetase vrtB. The polyketide synthase vrtA then may utilize the malonamoyl-CoA starter unit, followed by sequential condensation of eight malonyl-CoA units to form the polyketide backbone. The cyclization of the last ring could be mediated by the lactamase-like protein vrtG. The proposed post-PKS tailoring steps are a hydroxylation at C5 catalyzed the cytochrome P450 monooxygenase vrtE, a hydroxylation at C12a catalyzed by VrtH and/or VrtI, and an O-methylation by the O-methyltransferase vrtF. VrtC is then proposed to catalyze the transfer of a geranyl group synthesized by vrtD to the aromatic C ring of the tetracyclic polyketide intermediate of viridicatumtoxin to yield previridicatumtoxin. Finally, the cytochrome P450 monooxygenase vrtK catalyzes the spirocyclization of the geranyl moiety of previridicatumtoxin to afford viridicatumtoxin. The protein is FAD-dependent monooxygenase vrtH of Penicillium aethiopicum.